We begin with the raw amino-acid sequence, 162 residues long: Anaerobic nitrite reductase NSHB2 (162 aa).

A Globin domain is found at 16–159 (SFSEEQEALV…LVAAIKQEMK (144 aa)). The Homodimerization signature appears at 49–53 (EVAPS). Ser-59, Lys-73, His-77, Arg-100, Thr-104, and His-105 together coordinate heme b. The Homodimerization motif lies at 112–124 (DAHFEVTRFALLE).

The protein belongs to the plant globin family. In terms of assembly, homodimer. It depends on heme b as a cofactor. As to expression, mainly expressed in germinating seeds, seedlings, roots, flowers and leaves.

It localises to the cytoplasm. The protein resides in the nucleus. The enzyme catalyses Fe(III)-heme b-[protein] + nitric oxide + H2O = Fe(II)-heme b-[protein] + nitrite + 2 H(+). Its function is as follows. Phytoglobin that reduces nitrite to nitric oxide under anoxic conditions (e.g. during flooding or in waterlogged soil). May not function as an oxygen storage or transport protein. Has an unusually high affinity for O(2) through an hexacoordinate heme iron because of a very low dissociation constant. Promotes tolerance to low potassium K(+) conditions. This Oryza sativa subsp. indica (Rice) protein is Anaerobic nitrite reductase NSHB2.